Consider the following 736-residue polypeptide: ATP-dependent zinc metalloprotease FtsH (736 aa).

Disordered regions lie at residues M1 to R39 and Q57 to M83. The Cytoplasmic segment spans residues M1–K87. The span at Q57–G73 shows a compositional bias: polar residues. Residues A88 to P108 form a helical membrane-spanning segment. Residues D109 to W205 lie on the Periplasmic side of the membrane. The chain crosses the membrane as a helical span at residues A206–F226. Over R227 to S736 the chain is Cytoplasmic. ATP is bound at residue G301–T308. Residue H522 coordinates Zn(2+). E523 is an active-site residue. Residues H526 and D598 each contribute to the Zn(2+) site. The segment at P706–S736 is disordered.

It in the central section; belongs to the AAA ATPase family. In the C-terminal section; belongs to the peptidase M41 family. Homohexamer. Zn(2+) is required as a cofactor.

The protein resides in the cell inner membrane. Functionally, acts as a processive, ATP-dependent zinc metallopeptidase for both cytoplasmic and membrane proteins. Plays a role in the quality control of integral membrane proteins. The protein is ATP-dependent zinc metalloprotease FtsH of Syntrophus aciditrophicus (strain SB).